Consider the following 185-residue polypeptide: uncharacterized protein (185 aa).

Component of the acid-insoluble and acid-soluble organic matrix of calcified layers of the shell (at protein level).

The protein resides in the secreted. This is an uncharacterized protein from Lottia gigantea (Giant owl limpet).